A 69-amino-acid polypeptide reads, in one-letter code: Toxin Tma2 (69 aa).

The LCN-type CS-alpha/beta domain maps to 2–66; it reads KDDYPVDTAE…SPTKTSKRCN (65 aa). Intrachain disulfides connect Cys-14–Cys-65, Cys-18–Cys-41, Cys-27–Cys-48, and Cys-31–Cys-50.

Belongs to the long (4 C-C) scorpion toxin superfamily. Sodium channel inhibitor family. Expressed by the venom gland.

The protein localises to the secreted. Inhibits voltage-gated sodium channels (Nav). This toxin shows insect lethality against crickets. This chain is Toxin Tma2, found in Tityus macrochirus (Scorpion).